The sequence spans 572 residues: Proline--tRNA ligase (572 aa).

It belongs to the class-II aminoacyl-tRNA synthetase family. ProS type 1 subfamily. As to quaternary structure, homodimer.

The protein localises to the cytoplasm. The catalysed reaction is tRNA(Pro) + L-proline + ATP = L-prolyl-tRNA(Pro) + AMP + diphosphate. In terms of biological role, catalyzes the attachment of proline to tRNA(Pro) in a two-step reaction: proline is first activated by ATP to form Pro-AMP and then transferred to the acceptor end of tRNA(Pro). As ProRS can inadvertently accommodate and process non-cognate amino acids such as alanine and cysteine, to avoid such errors it has two additional distinct editing activities against alanine. One activity is designated as 'pretransfer' editing and involves the tRNA(Pro)-independent hydrolysis of activated Ala-AMP. The other activity is designated 'posttransfer' editing and involves deacylation of mischarged Ala-tRNA(Pro). The misacylated Cys-tRNA(Pro) is not edited by ProRS. The sequence is that of Proline--tRNA ligase from Serratia proteamaculans (strain 568).